Here is a 372-residue protein sequence, read N- to C-terminus: Glutamate 5-kinase (372 aa).

K14 contacts ATP. Residues S54, D141, and N153 each contribute to the substrate site. Residues 173–174 (TD) and 215–221 (TGGMATK) contribute to the ATP site. In terms of domain architecture, PUA spans 280 to 358 (KGKLVLDVGA…DEIESLLGYD (79 aa)).

This sequence belongs to the glutamate 5-kinase family.

The protein resides in the cytoplasm. It carries out the reaction L-glutamate + ATP = L-glutamyl 5-phosphate + ADP. It functions in the pathway amino-acid biosynthesis; L-proline biosynthesis; L-glutamate 5-semialdehyde from L-glutamate: step 1/2. Its function is as follows. Catalyzes the transfer of a phosphate group to glutamate to form L-glutamate 5-phosphate. This chain is Glutamate 5-kinase, found in Shewanella woodyi (strain ATCC 51908 / MS32).